The primary structure comprises 492 residues: N-succinylglutamate 5-semialdehyde dehydrogenase (492 aa).

220–225 (GSASTG) serves as a coordination point for NAD(+). Residues Glu243 and Cys277 contribute to the active site.

It belongs to the aldehyde dehydrogenase family. AstD subfamily.

It catalyses the reaction N-succinyl-L-glutamate 5-semialdehyde + NAD(+) + H2O = N-succinyl-L-glutamate + NADH + 2 H(+). It functions in the pathway amino-acid degradation; L-arginine degradation via AST pathway; L-glutamate and succinate from L-arginine: step 4/5. Functionally, catalyzes the NAD-dependent reduction of succinylglutamate semialdehyde into succinylglutamate. This is N-succinylglutamate 5-semialdehyde dehydrogenase from Salmonella gallinarum (strain 287/91 / NCTC 13346).